The sequence spans 505 residues: ATP synthase subunit alpha (505 aa).

An ATP-binding site is contributed by 169 to 176; it reads GDRKTGKT.

It belongs to the ATPase alpha/beta chains family. F-type ATPases have 2 components, CF(1) - the catalytic core - and CF(0) - the membrane proton channel. CF(1) has five subunits: alpha(3), beta(3), gamma(1), delta(1), epsilon(1). CF(0) has three main subunits: a(1), b(2) and c(9-12). The alpha and beta chains form an alternating ring which encloses part of the gamma chain. CF(1) is attached to CF(0) by a central stalk formed by the gamma and epsilon chains, while a peripheral stalk is formed by the delta and b chains.

The protein localises to the cell membrane. It catalyses the reaction ATP + H2O + 4 H(+)(in) = ADP + phosphate + 5 H(+)(out). In terms of biological role, produces ATP from ADP in the presence of a proton gradient across the membrane. The alpha chain is a regulatory subunit. This Pediococcus pentosaceus (strain ATCC 25745 / CCUG 21536 / LMG 10740 / 183-1w) protein is ATP synthase subunit alpha.